Reading from the N-terminus, the 301-residue chain is 4-diphosphocytidyl-2-C-methyl-D-erythritol kinase (301 aa).

Residue Lys-18 is part of the active site. 109-119 (PIASGIGGGSA) is a binding site for ATP. Asp-151 is an active-site residue.

It belongs to the GHMP kinase family. IspE subfamily.

The catalysed reaction is 4-CDP-2-C-methyl-D-erythritol + ATP = 4-CDP-2-C-methyl-D-erythritol 2-phosphate + ADP + H(+). Its pathway is isoprenoid biosynthesis; isopentenyl diphosphate biosynthesis via DXP pathway; isopentenyl diphosphate from 1-deoxy-D-xylulose 5-phosphate: step 3/6. Functionally, catalyzes the phosphorylation of the position 2 hydroxy group of 4-diphosphocytidyl-2C-methyl-D-erythritol. In Rhizobium meliloti (strain 1021) (Ensifer meliloti), this protein is 4-diphosphocytidyl-2-C-methyl-D-erythritol kinase.